Here is a 505-residue protein sequence, read N- to C-terminus: Histidine--tRNA ligase (505 aa).

The protein belongs to the class-II aminoacyl-tRNA synthetase family. Homodimer.

It localises to the cytoplasm. It catalyses the reaction tRNA(His) + L-histidine + ATP = L-histidyl-tRNA(His) + AMP + diphosphate + H(+). This is Histidine--tRNA ligase from Jannaschia sp. (strain CCS1).